The following is a 732-amino-acid chain: Prolyl endopeptidase-like (732 aa).

Residues Ser575, Asp661, and His707 each act as charge relay system in the active site.

This sequence belongs to the peptidase S9A family. Homodimer.

The protein localises to the cytoplasm. Its subcellular location is the cytosol. Functionally, serine peptidase whose precise substrate specificity remains unclear. Does not cleave peptides after a arginine or lysine residue. Regulates trans-Golgi network morphology and sorting by regulating the membrane binding of the AP-1 complex. May play a role in the regulation of synaptic vesicle exocytosis. This is Prolyl endopeptidase-like (PREPL) from Gallus gallus (Chicken).